Reading from the N-terminus, the 300-residue chain is Bifunctional protein FolD (300 aa).

NADP(+) is bound by residues 169 to 171 (GRG), Ser-196, and Ile-237.

Belongs to the tetrahydrofolate dehydrogenase/cyclohydrolase family. Homodimer.

It catalyses the reaction (6R)-5,10-methylene-5,6,7,8-tetrahydrofolate + NADP(+) = (6R)-5,10-methenyltetrahydrofolate + NADPH. It carries out the reaction (6R)-5,10-methenyltetrahydrofolate + H2O = (6R)-10-formyltetrahydrofolate + H(+). It functions in the pathway one-carbon metabolism; tetrahydrofolate interconversion. Functionally, catalyzes the oxidation of 5,10-methylenetetrahydrofolate to 5,10-methenyltetrahydrofolate and then the hydrolysis of 5,10-methenyltetrahydrofolate to 10-formyltetrahydrofolate. This is Bifunctional protein FolD from Clavibacter michiganensis subsp. michiganensis (strain NCPPB 382).